Here is a 306-residue protein sequence, read N- to C-terminus: Agmatinase (306 aa).

The Mn(2+) site is built by histidine 126, aspartate 149, histidine 151, aspartate 153, aspartate 230, and aspartate 232.

The protein belongs to the arginase family. Agmatinase subfamily. The cofactor is Mn(2+).

It catalyses the reaction agmatine + H2O = urea + putrescine. Its pathway is amine and polyamine biosynthesis; putrescine biosynthesis via agmatine pathway; putrescine from agmatine: step 1/1. Its function is as follows. Catalyzes the formation of putrescine from agmatine. The sequence is that of Agmatinase from Klebsiella pneumoniae (strain 342).